A 223-amino-acid chain; its full sequence is Phosphoribosylformylglycinamidine synthase subunit PurQ (223 aa).

In terms of domain architecture, Glutamine amidotransferase type-1 spans 3 to 223 (SAVILLPGLN…LFAGALGITA (221 aa)). Cys-87 serves as the catalytic Nucleophile. Catalysis depends on residues His-197 and Glu-199.

In terms of assembly, part of the FGAM synthase complex composed of 1 PurL, 1 PurQ and 2 PurS subunits.

Its subcellular location is the cytoplasm. The catalysed reaction is N(2)-formyl-N(1)-(5-phospho-beta-D-ribosyl)glycinamide + L-glutamine + ATP + H2O = 2-formamido-N(1)-(5-O-phospho-beta-D-ribosyl)acetamidine + L-glutamate + ADP + phosphate + H(+). It catalyses the reaction L-glutamine + H2O = L-glutamate + NH4(+). It functions in the pathway purine metabolism; IMP biosynthesis via de novo pathway; 5-amino-1-(5-phospho-D-ribosyl)imidazole from N(2)-formyl-N(1)-(5-phospho-D-ribosyl)glycinamide: step 1/2. Its function is as follows. Part of the phosphoribosylformylglycinamidine synthase complex involved in the purines biosynthetic pathway. Catalyzes the ATP-dependent conversion of formylglycinamide ribonucleotide (FGAR) and glutamine to yield formylglycinamidine ribonucleotide (FGAM) and glutamate. The FGAM synthase complex is composed of three subunits. PurQ produces an ammonia molecule by converting glutamine to glutamate. PurL transfers the ammonia molecule to FGAR to form FGAM in an ATP-dependent manner. PurS interacts with PurQ and PurL and is thought to assist in the transfer of the ammonia molecule from PurQ to PurL. The protein is Phosphoribosylformylglycinamidine synthase subunit PurQ of Brucella abortus biovar 1 (strain 9-941).